Reading from the N-terminus, the 326-residue chain is uncharacterized protein (326 aa).

Serine 132 lines the substrate pocket. The active-site Proton acceptor is the tyrosine 157.

The protein belongs to the NAD(P)-dependent epimerase/dehydratase family. dTDP-glucose dehydratase subfamily.

This is an uncharacterized protein from Methanocaldococcus jannaschii (strain ATCC 43067 / DSM 2661 / JAL-1 / JCM 10045 / NBRC 100440) (Methanococcus jannaschii).